The primary structure comprises 271 residues: Aquaporin-2 (271 aa).

At 1–11 (MWELRSIAFSR) the chain is on the cytoplasmic side. The helical transmembrane segment at 12–32 (AVLAEFLATLLFVFFGLGSAL) threads the bilayer. Over 33–40 (NWPQALPS) the chain is Extracellular. Residues 41–59 (VLQIAMAFGLAIGTLVQAL) traverse the membrane as a helical segment. Residues 60 to 64 (GHVSG) lie on the Cytoplasmic side of the membrane. The discontinuously helical intramembrane region spans 65–74 (AHINPAVTVA). The short motif at 68–70 (NPA) is the NPA 1 element. Residues 75–85 (CLVGCHVSFLR) are Cytoplasmic-facing. The chain crosses the membrane as a helical span at residues 86-107 (AVFYVAAQLLGAVAGAALLHEI). Residues 108–127 (TPPAIRGDLAVNALNNNSTA) lie on the Extracellular side of the membrane. N-linked (GlcNAc...) asparagine glycosylation occurs at N123. A helical transmembrane segment spans residues 128-148 (GQAVTVELFLTLQLVLCIFAS). At 149–156 (TDERRGDN) the chain is on the cytoplasmic side. The chain crosses the membrane as a helical span at residues 157–176 (VGTPALSIGFSVALGHLLGI). The Extracellular portion of the chain corresponds to 177-180 (HYTG). Residues 181-193 (CSMNPARSLAPAI) constitute an intramembrane region (discontinuously helical). The NPA 2 signature appears at 184 to 186 (NPA). The Extracellular segment spans residues 194–201 (VTGKFDDH). Residues 202–222 (WVFWIGPLVGAIVASLLYNYV) form a helical membrane-spanning segment. The Cytoplasmic portion of the chain corresponds to 223–271 (LFPPAKSLSERLAVLKGLEPDTDWEEREVRRRQSVELHSPQSLPRGSKA). The segment at 251–271 (VRRRQSVELHSPQSLPRGSKA) is disordered. S256 bears the Phosphoserine mark. The span at 261 to 271 (SPQSLPRGSKA) shows a compositional bias: polar residues.

This sequence belongs to the MIP/aquaporin (TC 1.A.8) family. In terms of assembly, homotetramer. In terms of processing, ser-256 phosphorylation is necessary and sufficient for expression at the apical membrane. Endocytosis is not phosphorylation-dependent. N-glycosylated.

The protein resides in the apical cell membrane. It localises to the basolateral cell membrane. Its subcellular location is the cell membrane. The protein localises to the cytoplasmic vesicle membrane. It is found in the golgi apparatus. The protein resides in the trans-Golgi network membrane. The enzyme catalyses H2O(in) = H2O(out). It catalyses the reaction glycerol(in) = glycerol(out). In terms of biological role, forms a water-specific channel that provides the plasma membranes of renal collecting duct with high permeability to water, thereby permitting water to move in the direction of an osmotic gradient. Could also be permeable to glycerol. This Bos taurus (Bovine) protein is Aquaporin-2.